Here is a 742-residue protein sequence, read N- to C-terminus: Condensin complex subunit 2 (742 aa).

Disordered stretches follow at residues 1 to 62 (MKRA…FNSS), 151 to 172 (QQTE…KKER), 452 to 473 (FNSS…STER), and 564 to 604 (IQPH…PSSS). Residues 21-39 (ALEKKRAKENSRKQRELRR) show a composition bias toward basic and acidic residues. Positions 53–62 (LNNSSPFNSS) are enriched in polar residues. Positions 154-165 (EEGEDAENDDED) are enriched in acidic residues. 2 stretches are compositionally biased toward polar residues: residues 452 to 470 (FNSS…SLSS) and 592 to 604 (PKQT…PSSS).

The protein belongs to the CND2 (condensin subunit 2) family. As to quaternary structure, component of the condensin complex, which contains the cut14/smc2 and cut3/smc2 heterodimer, and three non SMC subunits that probably regulate the complex: cnd1, cnd2 and cnd3.

Its subcellular location is the nucleus. It localises to the cytoplasm. It is found in the chromosome. In terms of biological role, regulatory subunit of the condensin complex, a complex required for conversion of interphase chromatin into mitotic-like condense chromosomes. The condensin complex probably introduces positive supercoils into relaxed DNA in the presence of type I topoisomerases and converts nicked DNA into positive knotted forms in the presence of type II topoisomerases. The condensin complex probably also plays a role during interphase in processes such as DNA repair. The sequence is that of Condensin complex subunit 2 (cnd2) from Schizosaccharomyces pombe (strain 972 / ATCC 24843) (Fission yeast).